The chain runs to 218 residues: tRNA (guanosine(18)-2'-O)-methyltransferase (218 aa).

The S-adenosyl-L-methionine site is built by T111 and I154.

This sequence belongs to the class IV-like SAM-binding methyltransferase superfamily. RNA methyltransferase TrmH family.

The catalysed reaction is guanosine(18) in tRNA + S-adenosyl-L-methionine = 2'-O-methylguanosine(18) in tRNA + S-adenosyl-L-homocysteine + H(+). Its function is as follows. Catalyzes the 2'-O methylation of guanosine at position 18 in tRNA. The protein is tRNA (guanosine(18)-2'-O)-methyltransferase of Borreliella burgdorferi (strain ATCC 35210 / DSM 4680 / CIP 102532 / B31) (Borrelia burgdorferi).